Here is a 485-residue protein sequence, read N- to C-terminus: UDP-N-acetylmuramate--L-alanine ligase (485 aa).

125-131 (GTHGKTT) contributes to the ATP binding site.

This sequence belongs to the MurCDEF family.

Its subcellular location is the cytoplasm. The enzyme catalyses UDP-N-acetyl-alpha-D-muramate + L-alanine + ATP = UDP-N-acetyl-alpha-D-muramoyl-L-alanine + ADP + phosphate + H(+). Its pathway is cell wall biogenesis; peptidoglycan biosynthesis. Its function is as follows. Cell wall formation. The chain is UDP-N-acetylmuramate--L-alanine ligase from Stutzerimonas stutzeri (strain A1501) (Pseudomonas stutzeri).